Reading from the N-terminus, the 256-residue chain is Phosphate import ATP-binding protein PstB (256 aa).

One can recognise an ABC transporter domain in the interval 10 to 251 (IRTVNVNFYY…PEQKQTEDYI (242 aa)). An ATP-binding site is contributed by 42 to 49 (GPSGCGKS).

This sequence belongs to the ABC transporter superfamily. Phosphate importer (TC 3.A.1.7) family. The complex is composed of two ATP-binding proteins (PstB), two transmembrane proteins (PstC and PstA) and a solute-binding protein (PstS).

The protein localises to the cell inner membrane. It carries out the reaction phosphate(out) + ATP + H2O = ADP + 2 phosphate(in) + H(+). In terms of biological role, part of the ABC transporter complex PstSACB involved in phosphate import. Responsible for energy coupling to the transport system. This is Phosphate import ATP-binding protein PstB from Syntrophus aciditrophicus (strain SB).